A 112-amino-acid polypeptide reads, in one-letter code: uncharacterized protein (112 aa).

Disordered stretches follow at residues 1–53 (MSKL…QRLK) and 80–112 (MINQ…MLEL). Over residues 8–22 (SALQKLIESQKNPNA) the composition is skewed to polar residues. The span at 86 to 96 (ETKKRKRKQKK) shows a compositional bias: basic residues. Over residues 101–112 (DYGVFEEDMLEL) the composition is skewed to acidic residues.

The protein localises to the nucleus. It is found in the nucleolus. This is an uncharacterized protein from Schizosaccharomyces pombe (strain 972 / ATCC 24843) (Fission yeast).